A 330-amino-acid chain; its full sequence is Ribose operon repressor (330 aa).

Residues 2–56 enclose the HTH lacI-type domain; it reads ATMKDVARLAGVSTSTVSHVINKDRFVSEAITAKVEAAIKELNYAPSALARSLKL. The H-T-H motif DNA-binding region spans 4–23; the sequence is MKDVARLAGVSTSTVSHVIN.

In terms of biological role, transcriptional repressor for the ribose rbsDACBK operon. RbsR binds to a region of perfect dyad symmetry spanning the rbs operon transcriptional start site. The affinity for the rbs operator is reduced by addition of ribose, consistent with ribose being the inducer of the operon. The chain is Ribose operon repressor (rbsR) from Escherichia coli O6:H1 (strain CFT073 / ATCC 700928 / UPEC).